We begin with the raw amino-acid sequence, 281 residues long: NADPH-dependent 7-cyano-7-deazaguanine reductase (281 aa).

A substrate-binding site is contributed by 88–90; it reads IES. An NADPH-binding site is contributed by 90 to 91; the sequence is SK. Cys-189 (thioimide intermediate) is an active-site residue. Catalysis depends on Asp-196, which acts as the Proton donor. 228–229 is a substrate binding site; that stretch reads HE. 257–258 serves as a coordination point for NADPH; it reads RG.

The protein belongs to the GTP cyclohydrolase I family. QueF type 2 subfamily. Homodimer.

Its subcellular location is the cytoplasm. The catalysed reaction is 7-aminomethyl-7-carbaguanine + 2 NADP(+) = 7-cyano-7-deazaguanine + 2 NADPH + 3 H(+). It participates in tRNA modification; tRNA-queuosine biosynthesis. Functionally, catalyzes the NADPH-dependent reduction of 7-cyano-7-deazaguanine (preQ0) to 7-aminomethyl-7-deazaguanine (preQ1). This is NADPH-dependent 7-cyano-7-deazaguanine reductase from Yersinia pseudotuberculosis serotype O:1b (strain IP 31758).